Consider the following 369-residue polypeptide: Methylthioribose-1-phosphate isomerase (369 aa).

Substrate is bound by residues 54-56 (RGA), arginine 95, and glutamine 208. Aspartate 249 serves as the catalytic Proton donor. Position 259 to 260 (259 to 260 (NK)) interacts with substrate.

It belongs to the eIF-2B alpha/beta/delta subunits family. MtnA subfamily.

The catalysed reaction is 5-(methylsulfanyl)-alpha-D-ribose 1-phosphate = 5-(methylsulfanyl)-D-ribulose 1-phosphate. It functions in the pathway amino-acid biosynthesis; L-methionine biosynthesis via salvage pathway; L-methionine from S-methyl-5-thio-alpha-D-ribose 1-phosphate: step 1/6. In terms of biological role, catalyzes the interconversion of methylthioribose-1-phosphate (MTR-1-P) into methylthioribulose-1-phosphate (MTRu-1-P). This Desulfosudis oleivorans (strain DSM 6200 / JCM 39069 / Hxd3) (Desulfococcus oleovorans) protein is Methylthioribose-1-phosphate isomerase.